Reading from the N-terminus, the 145-residue chain is Acidic phospholipase A2 (145 aa).

Residues 1–21 (MYPAHLLVLLAVCVSLLGAAS) form the signal peptide. Positions 22 to 27 (IPPLPL) are excised as a propeptide. Cystine bridges form between C38/C98, C54/C144, C56/C72, C71/C125, C78/C118, C87/C111, and C105/C116. Y55 and G57 together coordinate Ca(2+). Residue H75 is part of the active site. D76 contributes to the Ca(2+) binding site. D119 is a catalytic residue.

It belongs to the phospholipase A2 family. Group I subfamily. D49 sub-subfamily. Ca(2+) serves as cofactor. In terms of tissue distribution, expressed by the venom gland.

Its subcellular location is the secreted. It catalyses the reaction a 1,2-diacyl-sn-glycero-3-phosphocholine + H2O = a 1-acyl-sn-glycero-3-phosphocholine + a fatty acid + H(+). Its function is as follows. PLA2 catalyzes the calcium-dependent hydrolysis of the 2-acyl groups in 3-sn-phosphoglycerides. The protein is Acidic phospholipase A2 of Notechis scutatus scutatus (Mainland tiger snake).